The sequence spans 389 residues: Dual-specificity RNA methyltransferase RlmN (389 aa).

The active-site Proton acceptor is glutamate 94. Residues proline 134 to aspartate 367 enclose the Radical SAM core domain. Cysteines 141 and 372 form a disulfide. [4Fe-4S] cluster contacts are provided by cysteine 148, cysteine 152, and cysteine 155. S-adenosyl-L-methionine-binding positions include glycine 197–glutamate 198, serine 229, serine 253–histidine 255, and asparagine 329. Cysteine 372 acts as the S-methylcysteine intermediate in catalysis.

This sequence belongs to the radical SAM superfamily. RlmN family. [4Fe-4S] cluster serves as cofactor.

The protein localises to the cytoplasm. It carries out the reaction adenosine(2503) in 23S rRNA + 2 reduced [2Fe-2S]-[ferredoxin] + 2 S-adenosyl-L-methionine = 2-methyladenosine(2503) in 23S rRNA + 5'-deoxyadenosine + L-methionine + 2 oxidized [2Fe-2S]-[ferredoxin] + S-adenosyl-L-homocysteine. It catalyses the reaction adenosine(37) in tRNA + 2 reduced [2Fe-2S]-[ferredoxin] + 2 S-adenosyl-L-methionine = 2-methyladenosine(37) in tRNA + 5'-deoxyadenosine + L-methionine + 2 oxidized [2Fe-2S]-[ferredoxin] + S-adenosyl-L-homocysteine. Specifically methylates position 2 of adenine 2503 in 23S rRNA and position 2 of adenine 37 in tRNAs. m2A2503 modification seems to play a crucial role in the proofreading step occurring at the peptidyl transferase center and thus would serve to optimize ribosomal fidelity. This is Dual-specificity RNA methyltransferase RlmN from Sorangium cellulosum (strain So ce56) (Polyangium cellulosum (strain So ce56)).